The chain runs to 404 residues: Nicotinate phosphoribosyltransferase (404 aa).

At H225 the chain carries Phosphohistidine; by autocatalysis.

This sequence belongs to the NAPRTase family. In terms of processing, transiently phosphorylated on a His residue during the reaction cycle. Phosphorylation strongly increases the affinity for substrates and increases the rate of nicotinate D-ribonucleotide production. Dephosphorylation regenerates the low-affinity form of the enzyme, leading to product release.

It catalyses the reaction nicotinate + 5-phospho-alpha-D-ribose 1-diphosphate + ATP + H2O = nicotinate beta-D-ribonucleotide + ADP + phosphate + diphosphate. It participates in cofactor biosynthesis; NAD(+) biosynthesis; nicotinate D-ribonucleotide from nicotinate: step 1/1. Catalyzes the synthesis of beta-nicotinate D-ribonucleotide from nicotinate and 5-phospho-D-ribose 1-phosphate at the expense of ATP. The chain is Nicotinate phosphoribosyltransferase from Methanosarcina acetivorans (strain ATCC 35395 / DSM 2834 / JCM 12185 / C2A).